A 316-amino-acid polypeptide reads, in one-letter code: Universal stress protein E (316 aa).

Belongs to the universal stress protein A family.

The protein resides in the cytoplasm. In terms of biological role, required for resistance to DNA-damaging agents. In Escherichia coli O157:H7, this protein is Universal stress protein E (uspE).